Here is a 293-residue protein sequence, read N- to C-terminus: ATP synthase gamma chain (293 aa).

Belongs to the ATPase gamma chain family. F-type ATPases have 2 components, CF(1) - the catalytic core - and CF(0) - the membrane proton channel. CF(1) has five subunits: alpha(3), beta(3), gamma(1), delta(1), epsilon(1). CF(0) has three main subunits: a, b and c.

Its subcellular location is the cell membrane. In terms of biological role, produces ATP from ADP in the presence of a proton gradient across the membrane. The gamma chain is believed to be important in regulating ATPase activity and the flow of protons through the CF(0) complex. This Streptococcus agalactiae serotype Ia (strain ATCC 27591 / A909 / CDC SS700) protein is ATP synthase gamma chain.